The following is a 510-amino-acid chain: Ribonuclease Y (510 aa).

Residues 2–22 form a helical membrane-spanning segment; sequence IYIIFSSIFAGFILGFLVRVF. Residues 198-258 enclose the KH domain; sequence TVASVELPND…IRKELAKRTL (61 aa). One can recognise an HD domain in the interval 324–419; that stretch reads VLSHSKETAI…VQIADAISAS (96 aa).

Belongs to the RNase Y family.

It localises to the cell membrane. Functionally, endoribonuclease that initiates mRNA decay. The sequence is that of Ribonuclease Y from Borrelia garinii subsp. bavariensis (strain ATCC BAA-2496 / DSM 23469 / PBi) (Borreliella bavariensis).